A 567-amino-acid chain; its full sequence is Potassium-transporting ATPase potassium-binding subunit (567 aa).

The next 12 helical transmembrane spans lie at Leu-11–Leu-31, Ala-67–Trp-87, Gly-136–Val-156, Leu-179–Val-199, Phe-255–Phe-275, Val-286–Ala-306, Phe-333–Val-353, Leu-363–Gly-383, Gly-385–Gly-405, Leu-422–Val-442, Leu-489–Leu-509, and Leu-532–Ala-552.

It belongs to the KdpA family. The system is composed of three essential subunits: KdpA, KdpB and KdpC.

It localises to the cell inner membrane. In terms of biological role, part of the high-affinity ATP-driven potassium transport (or Kdp) system, which catalyzes the hydrolysis of ATP coupled with the electrogenic transport of potassium into the cytoplasm. This subunit binds the periplasmic potassium ions and delivers the ions to the membrane domain of KdpB through an intramembrane tunnel. This is Potassium-transporting ATPase potassium-binding subunit from Laribacter hongkongensis (strain HLHK9).